The primary structure comprises 919 residues: Isoleucine--tRNA ligase (919 aa).

The 'HIGH' region motif lies at P57–T67. E552 provides a ligand contact to L-isoleucyl-5'-AMP. The short motif at K593–S597 is the 'KMSKS' region element. Residue K596 participates in ATP binding. Residues C886, C889, C906, and C909 each contribute to the Zn(2+) site.

The protein belongs to the class-I aminoacyl-tRNA synthetase family. IleS type 1 subfamily. Monomer. Requires Zn(2+) as cofactor.

The protein localises to the cytoplasm. The enzyme catalyses tRNA(Ile) + L-isoleucine + ATP = L-isoleucyl-tRNA(Ile) + AMP + diphosphate. Catalyzes the attachment of isoleucine to tRNA(Ile). As IleRS can inadvertently accommodate and process structurally similar amino acids such as valine, to avoid such errors it has two additional distinct tRNA(Ile)-dependent editing activities. One activity is designated as 'pretransfer' editing and involves the hydrolysis of activated Val-AMP. The other activity is designated 'posttransfer' editing and involves deacylation of mischarged Val-tRNA(Ile). The protein is Isoleucine--tRNA ligase of Petrotoga mobilis (strain DSM 10674 / SJ95).